Here is a 368-residue protein sequence, read N- to C-terminus: mRNA export factor (368 aa).

The tract at residues 15 to 34 is disordered; that stretch reads TSMFGSTTTDNHNPMKDIEV. WD repeat units follow at residues 37–79, 84–114, 125–157, 168–206, 215–255, 271–301, and 310–346; these read SPDD…QTIP, MHTG…KMWD, QHDA…KFWD, QLPE…EFRR, HRCV…KDNF, QDIY…SFWD, and TSEQ…EFYN. T229 bears the Phosphothreonine mark.

It belongs to the WD repeat rae1 family. Interacts with NUMA1 (via N-terminal end of the coiled-coil domain); this interaction promotes spindle formation in mitosis. Interacts with NUP98. Interacts with MYCBP2. Interacts with USP11.

It is found in the cytoplasm. It localises to the nucleus. The protein resides in the cytoskeleton. Its subcellular location is the spindle pole. Its function is as follows. Plays a role in mitotic bipolar spindle formation. Binds mRNA. May function in nucleocytoplasmic transport and in directly or indirectly attaching cytoplasmic mRNPs to the cytoskeleton. The chain is mRNA export factor (Rae1) from Mus musculus (Mouse).